The sequence spans 130 residues: Small ribosomal subunit protein uS8 (130 aa).

Belongs to the universal ribosomal protein uS8 family. As to quaternary structure, part of the 30S ribosomal subunit. Contacts proteins S5 and S12.

Its function is as follows. One of the primary rRNA binding proteins, it binds directly to 16S rRNA central domain where it helps coordinate assembly of the platform of the 30S subunit. The polypeptide is Small ribosomal subunit protein uS8 (Ectopseudomonas mendocina (strain ymp) (Pseudomonas mendocina)).